We begin with the raw amino-acid sequence, 96 residues long: Co-chaperonin GroES (96 aa).

This sequence belongs to the GroES chaperonin family. In terms of assembly, heptamer of 7 subunits arranged in a ring. Interacts with the chaperonin GroEL.

It localises to the cytoplasm. In terms of biological role, together with the chaperonin GroEL, plays an essential role in assisting protein folding. The GroEL-GroES system forms a nano-cage that allows encapsulation of the non-native substrate proteins and provides a physical environment optimized to promote and accelerate protein folding. GroES binds to the apical surface of the GroEL ring, thereby capping the opening of the GroEL channel. This Hyphomonas neptunium (strain ATCC 15444) protein is Co-chaperonin GroES.